The primary structure comprises 327 residues: Glycoprotein integral membrane protein 1 (327 aa).

The N-terminal stretch at 1 to 23 (MEGGLSAPLSVRLLLFIALPAAG) is a signal peptide. Residues 24–259 (WLTTNAPRPP…LCRFWSSVVP (236 aa)) lie on the Extracellular side of the membrane. N-linked (GlcNAc...) asparagine glycosylation is found at N44, N62, and N146. Residues 260 to 280 (VLFMFLDVMVVGVLGAAGVIA) form a helical membrane-spanning segment. Residues 281–327 (VLKLLFPVCENKGILQVDKMNGISVPIILYPDGSEKTAQKLTDKTDI) are Cytoplasmic-facing.

It is found in the membrane. The sequence is that of Glycoprotein integral membrane protein 1 (Ginm1) from Mus musculus (Mouse).